The sequence spans 151 residues: Ribosome maturation factor RimP (151 aa).

This sequence belongs to the RimP family.

The protein localises to the cytoplasm. Functionally, required for maturation of 30S ribosomal subunits. This is Ribosome maturation factor RimP from Shewanella putrefaciens (strain CN-32 / ATCC BAA-453).